Reading from the N-terminus, the 300-residue chain is Meiotically up-regulated gene 165 protein (300 aa).

Disordered stretches follow at residues 1 to 38 and 50 to 109; these read MLEK…HKPS and TNSS…STLE. Residues 21–38 are compositionally biased toward polar residues; it reads ESHTFSSQTDDSYFHKPS. Residues 52-69 are compositionally biased toward low complexity; the sequence is SSVPSASRSPESIASSQS. The span at 94-103 shows a compositional bias: basic residues; sequence TLRKRGRKPK.

It is found in the nucleus. Has a role in meiosis. In Schizosaccharomyces pombe (strain 972 / ATCC 24843) (Fission yeast), this protein is Meiotically up-regulated gene 165 protein (mug165).